Here is a 305-residue protein sequence, read N- to C-terminus: NAD-dependent protein deacylase SIR4 (305 aa).

The transit peptide at 1–10 (MSAQVMHNRV) directs the protein to the mitochondrion. In terms of domain architecture, Deacetylase sirtuin-type spans 11 to 305 (MGTVKDSASK…VLEELASTIR (295 aa)). NAD(+) contacts are provided by residues 37-57 (GAGVSTDSGIPDYRGPQGIYS) and 118-121 (QNVD). Histidine 139 functions as the Proton acceptor in the catalytic mechanism. Zn(2+) contacts are provided by cysteine 147, cysteine 150, cysteine 209, and cysteine 212. Residues 249-251 (GSS), 275-277 (NLG), and serine 293 each bind NAD(+).

The protein belongs to the sirtuin family. Class II subfamily. Zn(2+) is required as a cofactor.

Its subcellular location is the mitochondrion matrix. The catalysed reaction is N(6)-acetyl-L-lysyl-[protein] + NAD(+) + H2O = 2''-O-acetyl-ADP-D-ribose + nicotinamide + L-lysyl-[protein]. NAD-dependent protein deacylase. Catalyzes the NAD-dependent hydrolysis of acyl groups from lysine residues. This chain is NAD-dependent protein deacylase SIR4, found in Batrachochytrium dendrobatidis (strain JAM81 / FGSC 10211) (Frog chytrid fungus).